The primary structure comprises 200 residues: Inner membrane protein E199L (200 aa).

Asparagine 131 carries an N-linked (GlcNAc...) asparagine; by host glycan. The helical transmembrane segment at 150-170 (INVMNHPFLTLILIILILIII) threads the bilayer.

This sequence belongs to the asfivirus E199L family. Interacts with host PYCR2; this interaction results in autophagy activation. Post-translationally, contains intramolecular disulfide bonds.

The protein resides in the virion membrane. It is found in the host membrane. Essential for viral fusion with host endosomal membrane and core release. Not required for virus morphogenesis and egress. Induces complete autophagy through the interaction with and down-regulation of host PYCR2. This Ornithodoros (relapsing fever ticks) protein is Inner membrane protein E199L.